The sequence spans 352 residues: Isopentenyl-diphosphate delta-isomerase (352 aa).

A substrate-binding site is contributed by 6 to 7 (RK). Residues 63–65 (AMT), S93, and N122 contribute to the FMN site. Residue 93–95 (SQR) coordinates substrate. A substrate-binding site is contributed by Q160. E161 contacts Mg(2+). FMN-binding positions include K192, T221, 271–273 (GIR), and 292–293 (SQ).

The protein belongs to the IPP isomerase type 2 family. As to quaternary structure, homooctamer. Dimer of tetramers. Requires FMN as cofactor. NADPH serves as cofactor. Mg(2+) is required as a cofactor.

The protein localises to the cytoplasm. The enzyme catalyses isopentenyl diphosphate = dimethylallyl diphosphate. Involved in the biosynthesis of isoprenoids. Catalyzes the 1,3-allylic rearrangement of the homoallylic substrate isopentenyl (IPP) to its allylic isomer, dimethylallyl diphosphate (DMAPP). This is Isopentenyl-diphosphate delta-isomerase from Pyrobaculum arsenaticum (strain DSM 13514 / JCM 11321 / PZ6).